The following is a 265-amino-acid chain: Undecaprenyl-diphosphatase (265 aa).

Transmembrane regions (helical) follow at residues 1 to 21 (MDWF…FLPI), 39 to 59 (QGLA…MMYY), 83 to 103 (LKLG…GFLG), 114 to 134 (ALVI…SDAF), 144 to 164 (LGVA…IPGT), 188 to 208 (SFLL…KDLI), 218 to 238 (MMAL…VFFI), and 244 to 264 (VGML…LFWL).

Belongs to the UppP family.

The protein resides in the cell inner membrane. It carries out the reaction di-trans,octa-cis-undecaprenyl diphosphate + H2O = di-trans,octa-cis-undecaprenyl phosphate + phosphate + H(+). Functionally, catalyzes the dephosphorylation of undecaprenyl diphosphate (UPP). Confers resistance to bacitracin. The polypeptide is Undecaprenyl-diphosphatase (Alcanivorax borkumensis (strain ATCC 700651 / DSM 11573 / NCIMB 13689 / SK2)).